Here is a 142-residue protein sequence, read N- to C-terminus: Transcriptional regulator MraZ (142 aa).

2 consecutive SpoVT-AbrB domains span residues 5-47 and 76-119; these read EFQH…PQHE and ATEC…SKEE.

This sequence belongs to the MraZ family. In terms of assembly, forms oligomers.

Its subcellular location is the cytoplasm. It localises to the nucleoid. The polypeptide is Transcriptional regulator MraZ (Desulforamulus reducens (strain ATCC BAA-1160 / DSM 100696 / MI-1) (Desulfotomaculum reducens)).